A 23-amino-acid polypeptide reads, in one-letter code: Hongotoxin-4 (23 aa).

It belongs to the short scorpion toxin superfamily. Potassium channel inhibitor family. Alpha-KTx 02 subfamily. In terms of tissue distribution, expressed by the venom gland.

It localises to the secreted. In terms of biological role, potent selective inhibitor of Kv1/KCNA voltage-gated potassium channels. This is Hongotoxin-4 from Centruroides limbatus (Bark scorpion).